Consider the following 191-residue polypeptide: Leucyl/phenylalanyl-tRNA--protein transferase (191 aa).

The protein belongs to the L/F-transferase family.

The protein localises to the cytoplasm. The catalysed reaction is N-terminal L-lysyl-[protein] + L-leucyl-tRNA(Leu) = N-terminal L-leucyl-L-lysyl-[protein] + tRNA(Leu) + H(+). The enzyme catalyses N-terminal L-arginyl-[protein] + L-leucyl-tRNA(Leu) = N-terminal L-leucyl-L-arginyl-[protein] + tRNA(Leu) + H(+). It catalyses the reaction L-phenylalanyl-tRNA(Phe) + an N-terminal L-alpha-aminoacyl-[protein] = an N-terminal L-phenylalanyl-L-alpha-aminoacyl-[protein] + tRNA(Phe). Its function is as follows. Functions in the N-end rule pathway of protein degradation where it conjugates Leu, Phe and, less efficiently, Met from aminoacyl-tRNAs to the N-termini of proteins containing an N-terminal arginine or lysine. This chain is Leucyl/phenylalanyl-tRNA--protein transferase, found in Rubrobacter xylanophilus (strain DSM 9941 / JCM 11954 / NBRC 16129 / PRD-1).